The following is a 675-amino-acid chain: NADH-ubiquinone oxidoreductase 75 kDa subunit (675 aa).

One can recognise a 2Fe-2S ferredoxin-type domain in the interval 2–80 (KNISFKVNDF…SMNIYTNTLK (79 aa)). [2Fe-2S] cluster-binding residues include cysteine 36, cysteine 47, cysteine 50, and cysteine 64. Residues 80–119 (KVKKARESVLEFLLANHPLDCPICDQGGECDLQDQSVVFG) enclose the 4Fe-4S His(Cys)3-ligated-type domain. [4Fe-4S] cluster contacts are provided by histidine 96, cysteine 100, cysteine 103, cysteine 109, cysteine 148, cysteine 151, cysteine 154, and cysteine 198. A 4Fe-4S Mo/W bis-MGD-type domain is found at 217–273 (LKSYNSIDVLDSLHSNIRVDIRGTKIMRILPRVNSELNEDWITDKIRFSYDSFRRQR).

It belongs to the complex I 75 kDa subunit family. Complex I is composed of about 30 different subunits. It depends on [2Fe-2S] cluster as a cofactor. [4Fe-4S] cluster is required as a cofactor.

The protein localises to the mitochondrion inner membrane. The enzyme catalyses a ubiquinone + NADH + 5 H(+)(in) = a ubiquinol + NAD(+) + 4 H(+)(out). Core subunit of the mitochondrial membrane respiratory chain NADH dehydrogenase (Complex I) that is believed to belong to the minimal assembly required for catalysis. Complex I functions in the transfer of electrons from NADH to the respiratory chain. The immediate electron acceptor for the enzyme is believed to be ubiquinone. This is the largest subunit of complex I and it is a component of the iron-sulfur (IP) fragment of the enzyme. It may form part of the active site crevice where NADH is oxidized. This is NADH-ubiquinone oxidoreductase 75 kDa subunit (NAD11) from Acanthamoeba castellanii (Amoeba).